The primary structure comprises 788 residues: Ribosome biogenesis protein ERB1 (788 aa).

The disordered stretch occupies residues 1 to 91; it reads MGDLKGSRKR…SKPIREKSKP (91 aa). The span at 38-50 shows a compositional bias: basic and acidic residues; sequence LSDKSHDTEHSSD. Residues 51–78 are compositionally biased toward acidic residues; the sequence is SEIELVDDLSSDDGEEYEDEFDSDEIPS. Residues 80–91 show a composition bias toward basic and acidic residues; that stretch reads IESKPIREKSKP. 6 WD repeats span residues 433–472, 476–516, 613–651, 654–699, 703–742, and 758–788; these read GHSGRVRTLAIDPTGVWLASGGDDGTVRVWELLTGRQIWS, SDEE…PEME, KGGGPPQAAHFHPSKPILFVANQRTIRSYDLSRQSLVKI, PGAR…RPYK, YHQKAIRAVRYHSNYPLFADASDDGSLQIFHGSVTGDLLS, and TGELGVLDLDWHPREAWCVSAGADGTCRLWT.

It belongs to the WD repeat BOP1/ERB1 family. Component of the NOP7 complex, composed of ERB1, NOP7 and YTM1. The complex is held together by ERB1, which interacts with NOP7 via its N-terminal domain and with YTM1 via a high-affinity interaction between the seven-bladed beta-propeller domains of the 2 proteins. The NOP7 complex associates with the 66S pre-ribosome.

It localises to the nucleus. It is found in the nucleolus. The protein resides in the nucleoplasm. In terms of biological role, component of the NOP7 complex, which is required for maturation of the 25S and 5.8S ribosomal RNAs and formation of the 60S ribosome. The sequence is that of Ribosome biogenesis protein ERB1 from Ajellomyces capsulatus (strain NAm1 / WU24) (Darling's disease fungus).